Reading from the N-terminus, the 316-residue chain is Pantothenate kinase (316 aa).

Residue 95-102 (GSVAVGKS) participates in ATP binding.

This sequence belongs to the prokaryotic pantothenate kinase family.

Its subcellular location is the cytoplasm. It carries out the reaction (R)-pantothenate + ATP = (R)-4'-phosphopantothenate + ADP + H(+). Its pathway is cofactor biosynthesis; coenzyme A biosynthesis; CoA from (R)-pantothenate: step 1/5. This chain is Pantothenate kinase, found in Shewanella sp. (strain MR-4).